We begin with the raw amino-acid sequence, 349 residues long: N-acetyltaurine hydrolase (349 aa).

Residues histidine 26, histidine 28, glutamate 169, histidine 201, histidine 230, and aspartate 298 each coordinate a divalent metal cation.

This sequence belongs to the metallo-dependent hydrolases superfamily. Phosphotriesterase family. Requires a divalent metal cation as cofactor.

Its subcellular location is the cytoplasm. The protein resides in the cytosol. It catalyses the reaction N-acetyltaurine + H2O = taurine + acetate. The catalysed reaction is N-propanoyltaurine + H2O = propanoate + taurine. The enzyme catalyses N-acetyl-L-methionine + H2O = L-methionine + acetate. It carries out the reaction N-acetyl-L-isoleucine + H2O = L-isoleucine + acetate. It catalyses the reaction N-acetyl-L-leucine + H2O = L-leucine + acetate. The catalysed reaction is N-acetyl-L-valine + H2O = L-valine + acetate. N-acetyltaurine hydrolase that catalyzes the hydrolysis of N-acetyltaurine into taurine and acetate. PTER also acts on other N-acetyl amino acids (Met, Ile, Leu, Val) and N-propionyltaurine, but at lower rates. The sequence is that of N-acetyltaurine hydrolase (pter) from Danio rerio (Zebrafish).